The primary structure comprises 283 residues: Bifunctional protein FolD (283 aa).

NADP(+) contacts are provided by residues 166–168 (GAS) and Ile-232.

This sequence belongs to the tetrahydrofolate dehydrogenase/cyclohydrolase family. Homodimer.

The enzyme catalyses (6R)-5,10-methylene-5,6,7,8-tetrahydrofolate + NADP(+) = (6R)-5,10-methenyltetrahydrofolate + NADPH. It carries out the reaction (6R)-5,10-methenyltetrahydrofolate + H2O = (6R)-10-formyltetrahydrofolate + H(+). It participates in one-carbon metabolism; tetrahydrofolate interconversion. Functionally, catalyzes the oxidation of 5,10-methylenetetrahydrofolate to 5,10-methenyltetrahydrofolate and then the hydrolysis of 5,10-methenyltetrahydrofolate to 10-formyltetrahydrofolate. In Wigglesworthia glossinidia brevipalpis, this protein is Bifunctional protein FolD.